We begin with the raw amino-acid sequence, 588 residues long: Schlafen family member 12-like (588 aa).

Residues 566 to 586 (IFLFVCLFRFCLFVCWFVCFF) form a helical membrane-spanning segment.

Belongs to the Schlafen family.

The protein resides in the membrane. In Homo sapiens (Human), this protein is Schlafen family member 12-like (SLFN12L).